The sequence spans 634 residues: Ankyrin repeat and SOCS box protein 2 (634 aa).

A UIM domain is found at 26–45 (SEEELLQMAIEQSLADKTRG). The segment at 36 to 82 (EQSLADKTRGPTPAEASASSQTNHQPGHFHPWTRSPSSPENPPARAP) is disordered. ANK repeat units lie at residues 104–133 (AAMDPVLKAIKEGDEEALKIMIQDGKNLAE), 137–167 (EGWLPLHEAAYYGQLGCLKVLQQAYPGTIDQ), 171–200 (QEETALYLATCREHLDCLLSLLQAGAEPDI), 204–233 (SRETPLYKACERKNAEAVRILVRYNADANH), 237–266 (RGWTALHESVSRNDLEVMEILVSGGAKVEA), 270–299 (YSITPLFVAAQSGQLEALRFLAKHGADINT), 303–332 (DSASALYEASKNEHEDVVEFLLSQGADANK), 336–365 (DGLLPLHVASKKGNYRIVQMLLPVTSRTRV), 368–397 (SGISPLHLAAERNHDAVLEALLAARFDVNA), 410–439 (RRSSALYFAVVNNNVYATELLLLAGADPNR), 440–469 (DVISPLLVAIRHGCLRTMQLLLDHGANIDA), and 476–504 (TAFPATIMFAMKCLSLLKFLMDLGCDGEP). Serine 371 is modified (phosphoserine). Positions 580–634 (EDWAVIKEKAEPPRPLAHLCRLRVRKAIGKYRIKLLDTLPLPGRLIRYLKYENTQ) constitute an SOCS box domain.

The protein belongs to the ankyrin SOCS box (ASB) family. Component of a probable ECS E3 ubiquitin-protein ligase complex which contains CUL5, either RBX1 or RNF7/RBX2, Elongin BC complex (ELOB and ELOC) and ASB2. Interacts with SKP2. Through its interaction with SKP2, likely to bridge the formation of dimeric E3-ubiquitin-protein ligase complexes composed of an ECS complex and an SCF(SKP2) complex. Interacts with JAK2; the interaction targets JAK2 for Notch-mediated proteasomal degradation. Interacts with TCF3/E2A; the interaction is mediated by SKP2 and targets TCF3 for Notch-mediated proteasomal degradation. In terms of assembly, interacts with DES. In terms of processing, monoubiquitinated. Post-translationally, not monoubiquitinated. Phosphorylation at Ser-371 is required for association with FLNA and subsequent FLNA degradation. In terms of tissue distribution, highest expression in muscle, heart and spleen. Highly expressed in cells of the first and second heart fields in the developing embryonic heart. At 9.5 dpc, robust expression predominantly in the left and right ventricles (RV) and to a lower extent in inflow and outflow tracts. At 10.5 and 11.5 dpc, expression is restricted to the myocardium with no expression observed in the endocardium. As to expression, not expressed in immature dendritic cells. Highly expressed in adult skeletal muscle with very low levels in adult bone marrow. Expressed in immature dendritic cells and in primary dendritic cells derived from the spleen. Highly expressed in adult bone marrow with negligible levels in adult skeletal muscle. Expressed at higher levels in T helper type 2 (Th2) cells than in regulatory T (Treg) cells, type 1 helper T (Th1) cells and T helper 17 (Th17) cells.

The protein resides in the cytoplasm. It localises to the cytoskeleton. The protein localises to the stress fiber. It is found in the myofibril. Its subcellular location is the sarcomere. The protein resides in the z line. The protein operates within protein modification; protein ubiquitination. Its function is as follows. Substrate-recognition component of a SCF-like ECS (Elongin-Cullin-SOCS-box protein) E3 ubiquitin-protein ligase complex which mediates the ubiquitination and subsequent proteasomal degradation of target proteins. Mediates Notch-induced ubiquitination and degradation of substrates including TCF3/E2A and JAK2. Required during embryonic heart development for complete heart looping. Required for cardiomyocyte differentiation. Specifically promotes the ubiquitination of SMAD9 and targets it for proteasomal degradation, leading to avoid excessive accumulation of SMAD9. Plays a role in the regulation of NK-cell migration by modulating protein levels of filamin A/FLNA via regulation of its ubiquitination and proteasome degradation. In terms of biological role, involved in myogenic differentiation and targets filamin FLNB for proteasomal degradation but not filamin FLNA. Also targets DES for proteasomal degradation. Acts as a negative regulator of skeletal muscle mass. Targets filamins FLNA and FLNB for proteasomal degradation. This leads to enhanced adhesion of hematopoietic cells to fibronectin. Required for FLNA degradation in immature cardiomyocytes which is necessary for actin cytoskeleton remodeling, leading to proper organization of myofibrils and function of mature cardiomyocytes. Required for degradation of FLNA and FLNB in immature dendritic cells (DC) which enhances immature DC migration by promoting DC podosome formation and DC-mediated degradation of the extracellular matrix. Does not promote proteasomal degradation of tyrosine-protein kinases JAK1 or JAK2 in hematopoietic cells. The polypeptide is Ankyrin repeat and SOCS box protein 2 (Mus musculus (Mouse)).